A 513-amino-acid polypeptide reads, in one-letter code: 2,3-bisphosphoglycerate-independent phosphoglycerate mutase (513 aa).

Residues aspartate 13 and serine 63 each contribute to the Mn(2+) site. Serine 63 (phosphoserine intermediate) is an active-site residue. Residues histidine 124, 154–155 (RD), arginine 186, arginine 192, 262–265 (RADR), and lysine 335 each bind substrate. Mn(2+) is bound by residues aspartate 402, histidine 406, aspartate 443, histidine 444, and histidine 462.

Belongs to the BPG-independent phosphoglycerate mutase family. As to quaternary structure, monomer. Mn(2+) serves as cofactor.

The enzyme catalyses (2R)-2-phosphoglycerate = (2R)-3-phosphoglycerate. It functions in the pathway carbohydrate degradation; glycolysis; pyruvate from D-glyceraldehyde 3-phosphate: step 3/5. In terms of biological role, catalyzes the interconversion of 2-phosphoglycerate and 3-phosphoglycerate. The chain is 2,3-bisphosphoglycerate-independent phosphoglycerate mutase from Photobacterium profundum (strain SS9).